The sequence spans 211 residues: MTRPSARHVLPEFTERTSAGTRTSDPYSKLLQERIVFLGTPVDETSANDVTAQLMYLEHQAPDRDIELYVNSPGGSFTAMTAIYDTMRYVACDVATTCLGQAGPSAAVLLAAGTPGKRAALPGARVVLHQPALTEPVRGQAGDLAVHAAELVRVRARLEEILVRHTGRTPGQVAADLERDTVLDARQAREYGLVDRIVPGRRTPPASSGAR.

Residues 1–24 (MTRPSARHVLPEFTERTSAGTRTS) are disordered. H129 is a catalytic residue.

The protein belongs to the peptidase S14 family.

In terms of biological role, has lost one of the conserved residue (Ser) proposed to be part of the active site. Therefore it could be inactive. The chain is Putative ATP-dependent Clp protease proteolytic subunit-like from Streptomyces coelicolor (strain ATCC BAA-471 / A3(2) / M145).